Here is a 305-residue protein sequence, read N- to C-terminus: Glycine--tRNA ligase alpha subunit (305 aa).

This sequence belongs to the class-II aminoacyl-tRNA synthetase family. Tetramer of two alpha and two beta subunits.

The protein resides in the cytoplasm. It catalyses the reaction tRNA(Gly) + glycine + ATP = glycyl-tRNA(Gly) + AMP + diphosphate. This Streptococcus pneumoniae (strain P1031) protein is Glycine--tRNA ligase alpha subunit.